A 65-amino-acid polypeptide reads, in one-letter code: MKTSVLFAILGLALLFCLSFGVELEETGRECGGLMTRCDGKTTFCCSGMNCSPTWKWCVYAPGRR.

The first 21 residues, 1 to 21 (MKTSVLFAILGLALLFCLSFG), serve as a signal peptide directing secretion. Positions 22–29 (VELEETGR) are excised as a propeptide. 3 cysteine pairs are disulfide-bonded: Cys-31–Cys-46, Cys-38–Cys-51, and Cys-45–Cys-58. Pro-62 carries the post-translational modification Proline amide.

This sequence belongs to the neurotoxin 10 (Hwtx-1) family. 46 (Jztx-7/10/12) subfamily. Expressed by the venom gland.

Its subcellular location is the secreted. In terms of biological role, probable ion channel inhibitor. Shows insecticidal activity when injected into mealworms. This chain is Orally active insecticidal peptide-3, found in Selenotypus plumipes (Australian featherleg tarantula).